The sequence spans 262 residues: Large ribosomal subunit protein uL10m (262 aa).

A mitochondrion-targeting transit peptide spans 1–28 (MAAAVAGILRGGLPPRAAWLPTLQTVRH). Residues 243–262 (GDCATSANEKLHPPDPAPDA) form a disordered region.

Belongs to the universal ribosomal protein uL10 family. Component of the mitochondrial ribosome large subunit (39S) which comprises a 16S rRNA and about 50 distinct proteins.

Its subcellular location is the mitochondrion. The polypeptide is Large ribosomal subunit protein uL10m (Mrpl10) (Mus musculus (Mouse)).